The primary structure comprises 369 residues: tRNA 2-selenouridine synthase (369 aa).

The region spanning 15–138 (FLNQHPMMDV…MRQYLIGVIE (124 aa)) is the Rhodanese domain. Cysteine 98 functions as the S-selanylcysteine intermediate in the catalytic mechanism.

The protein belongs to the SelU family. Monomer.

It catalyses the reaction 5-methylaminomethyl-2-thiouridine(34) in tRNA + selenophosphate + (2E)-geranyl diphosphate + H2O + H(+) = 5-methylaminomethyl-2-selenouridine(34) in tRNA + (2E)-thiogeraniol + phosphate + diphosphate. The catalysed reaction is 5-methylaminomethyl-2-thiouridine(34) in tRNA + (2E)-geranyl diphosphate = 5-methylaminomethyl-S-(2E)-geranyl-thiouridine(34) in tRNA + diphosphate. It carries out the reaction 5-methylaminomethyl-S-(2E)-geranyl-thiouridine(34) in tRNA + selenophosphate + H(+) = 5-methylaminomethyl-2-(Se-phospho)selenouridine(34) in tRNA + (2E)-thiogeraniol. The enzyme catalyses 5-methylaminomethyl-2-(Se-phospho)selenouridine(34) in tRNA + H2O = 5-methylaminomethyl-2-selenouridine(34) in tRNA + phosphate. In terms of biological role, involved in the post-transcriptional modification of the uridine at the wobble position (U34) of tRNA(Lys), tRNA(Glu) and tRNA(Gln). Catalyzes the conversion of 2-thiouridine (S2U-RNA) to 2-selenouridine (Se2U-RNA). Acts in a two-step process involving geranylation of 2-thiouridine (S2U) to S-geranyl-2-thiouridine (geS2U) and subsequent selenation of the latter derivative to 2-selenouridine (Se2U) in the tRNA chain. This is tRNA 2-selenouridine synthase from Shewanella sp. (strain W3-18-1).